Reading from the N-terminus, the 268-residue chain is Tryptophan synthase alpha chain (268 aa).

Catalysis depends on proton acceptor residues E49 and D60.

Belongs to the TrpA family. In terms of assembly, tetramer of two alpha and two beta chains.

The catalysed reaction is (1S,2R)-1-C-(indol-3-yl)glycerol 3-phosphate + L-serine = D-glyceraldehyde 3-phosphate + L-tryptophan + H2O. Its pathway is amino-acid biosynthesis; L-tryptophan biosynthesis; L-tryptophan from chorismate: step 5/5. The alpha subunit is responsible for the aldol cleavage of indoleglycerol phosphate to indole and glyceraldehyde 3-phosphate. The protein is Tryptophan synthase alpha chain of Edwardsiella ictaluri (strain 93-146).